The chain runs to 431 residues: Adenylosuccinate synthetase (431 aa).

GTP-binding positions include 13–19 and 41–43; these read GDEGKGK and GHT. Asp-14 (proton acceptor) is an active-site residue. 2 residues coordinate Mg(2+): Asp-14 and Gly-41. IMP is bound by residues 14 to 17, 39 to 42, Thr-130, Arg-144, Gln-225, Thr-240, and Arg-304; these read DEGK and NAGH. His-42 (proton donor) is an active-site residue. 300 to 306 contacts substrate; the sequence is ATTHRPR. GTP-binding positions include Arg-306, 332–334, and 414–416; these read KLD and STG.

This sequence belongs to the adenylosuccinate synthetase family. As to quaternary structure, homodimer. It depends on Mg(2+) as a cofactor.

It is found in the cytoplasm. It carries out the reaction IMP + L-aspartate + GTP = N(6)-(1,2-dicarboxyethyl)-AMP + GDP + phosphate + 2 H(+). It participates in purine metabolism; AMP biosynthesis via de novo pathway; AMP from IMP: step 1/2. Plays an important role in the de novo pathway of purine nucleotide biosynthesis. Catalyzes the first committed step in the biosynthesis of AMP from IMP. The chain is Adenylosuccinate synthetase from Nitrosococcus oceani (strain ATCC 19707 / BCRC 17464 / JCM 30415 / NCIMB 11848 / C-107).